Reading from the N-terminus, the 49-residue chain is Large ribosomal subunit protein bL33 (49 aa).

The protein belongs to the bacterial ribosomal protein bL33 family.

The sequence is that of Large ribosomal subunit protein bL33 from Streptococcus pyogenes serotype M18 (strain MGAS8232).